The sequence spans 102 residues: NADH-quinone oxidoreductase subunit K (102 aa).

3 helical membrane-spanning segments follow: residues 4–24, 31–51, and 65–85; these read IGLN…LVGV, LMLF…FAAI, and FFVI…LIVW.

This sequence belongs to the complex I subunit 4L family. NDH-1 is composed of 14 different subunits. Subunits NuoA, H, J, K, L, M, N constitute the membrane sector of the complex.

It localises to the cell inner membrane. It catalyses the reaction a quinone + NADH + 5 H(+)(in) = a quinol + NAD(+) + 4 H(+)(out). Its function is as follows. NDH-1 shuttles electrons from NADH, via FMN and iron-sulfur (Fe-S) centers, to quinones in the respiratory chain. The immediate electron acceptor for the enzyme in this species is believed to be ubiquinone. Couples the redox reaction to proton translocation (for every two electrons transferred, four hydrogen ions are translocated across the cytoplasmic membrane), and thus conserves the redox energy in a proton gradient. This chain is NADH-quinone oxidoreductase subunit K, found in Sulfurimonas denitrificans (strain ATCC 33889 / DSM 1251) (Thiomicrospira denitrificans (strain ATCC 33889 / DSM 1251)).